A 115-amino-acid chain; its full sequence is Parathyroid hormone (115 aa).

Residues 1 to 25 (MMSANTVAKVMIIMLAVCLLTQTDG) form the signal peptide. The propeptide occupies 26-31 (KPVRKR). Positions 51 to 69 (RMQWLRRKLQDMHNFVSLG) are important for receptor binding.

Belongs to the parathyroid hormone family. Interacts with PTH1R (via N-terminal extracellular domain). In terms of tissue distribution, highly expressed in the parathyroid gland. Also expressed in the placenta, thymus and testis.

It localises to the secreted. In terms of biological role, parathyroid hormone elevates calcium level by dissolving the salts in bone and preventing their renal excretion. Acts by binding to its receptor, PTH1R, activating G protein-coupled receptor signaling. Stimulates [1-14C]-2-deoxy-D-glucose (2DG) transport and glycogen synthesis in osteoblastic cells. In Mus musculus (Mouse), this protein is Parathyroid hormone.